The primary structure comprises 240 residues: Uridylate kinase (240 aa).

Residue 12-15 participates in ATP binding; that stretch reads KLSG. The involved in allosteric activation by GTP stretch occupies residues 20 to 25; sequence GEQGNG. UMP is bound at residue Gly54. The ATP site is built by Gly55 and Arg59. UMP is bound by residues Asp74 and 135–142; that span reads TGNPYFST. ATP-binding residues include Asn163, Tyr169, and Asp172.

This sequence belongs to the UMP kinase family. As to quaternary structure, homohexamer.

The protein localises to the cytoplasm. The catalysed reaction is UMP + ATP = UDP + ADP. The protein operates within pyrimidine metabolism; CTP biosynthesis via de novo pathway; UDP from UMP (UMPK route): step 1/1. With respect to regulation, allosterically activated by GTP. Inhibited by UTP. Catalyzes the reversible phosphorylation of UMP to UDP. The protein is Uridylate kinase of Bacillus velezensis (strain DSM 23117 / BGSC 10A6 / LMG 26770 / FZB42) (Bacillus amyloliquefaciens subsp. plantarum).